The sequence spans 117 residues: Large ribosomal subunit protein uL22 (117 aa).

The protein belongs to the universal ribosomal protein uL22 family. Part of the 50S ribosomal subunit.

In terms of biological role, this protein binds specifically to 23S rRNA; its binding is stimulated by other ribosomal proteins, e.g. L4, L17, and L20. It is important during the early stages of 50S assembly. It makes multiple contacts with different domains of the 23S rRNA in the assembled 50S subunit and ribosome. Its function is as follows. The globular domain of the protein is located near the polypeptide exit tunnel on the outside of the subunit, while an extended beta-hairpin is found that lines the wall of the exit tunnel in the center of the 70S ribosome. The sequence is that of Large ribosomal subunit protein uL22 from Chlorobium phaeobacteroides (strain BS1).